Reading from the N-terminus, the 651-residue chain is Beta-glucuronidase (651 aa).

Positions 1-22 (MSRGPAGAWVALGPLLWTCGLA) are cleaved as a signal peptide. 2 N-linked (GlcNAc...) asparagine glycosylation sites follow: asparagine 172 and asparagine 419. Catalysis depends on glutamate 450, which acts as the Proton donor. The N-linked (GlcNAc...) asparagine glycan is linked to asparagine 630.

This sequence belongs to the glycosyl hydrolase 2 family. In terms of assembly, homotetramer.

It localises to the lysosome. It catalyses the reaction a beta-D-glucuronoside + H2O = D-glucuronate + an alcohol. Inhibited by L-aspartic acid. Functionally, plays an important role in the degradation of dermatan and keratan sulfates. This is Beta-glucuronidase (GUSB) from Canis lupus familiaris (Dog).